The following is a 172-amino-acid chain: L-amino acid N-acyltransferase MnaT (172 aa).

Positions 1–163 (MSIRFARKAD…DLTFMQLQLD (163 aa)) constitute an N-acetyltransferase domain. Residues 85–87 (VYV), 93–98 (GKGLGR), Asn124, and Ser133 each bind acetyl-CoA.

The protein belongs to the acetyltransferase family. PAT/BAR subfamily.

The catalysed reaction is L-methionine + acetyl-CoA = N-acetyl-L-methionine + CoA + H(+). The enzyme catalyses propanoyl-CoA + L-methionine = N-propanoyl-L-methioninate + CoA + H(+). It carries out the reaction L-alpha-phenylglycine + acetyl-CoA = N-acetyl-L-alpha-phenylglycine + CoA + H(+). It catalyses the reaction L-methionine sulfoximine + acetyl-CoA = N-acetyl-L-methionine sulfoximine + CoA + H(+). The catalysed reaction is L-methionine sulfone + acetyl-CoA = N-acetyl-L-methionine sulfone + CoA + H(+). Its function is as follows. Acyltransferase that appears to be required for E.coli optimal growth rate and yield via the formation of N-acetylated amino acids. Catalyzes the acylation of L-methionine using acetyl-CoA or propanoyl-CoA as acyl donors, and the acetylation of L-phenylglycine. Is also able to N-acylate other free L-amino acids and their derivatives using a CoA thioester as cosubstrate. Using acetyl-CoA as an acyl donor, substrate specificity is methionine sulfone &gt; methionine sulfoximine &gt; methionine sulfoxide &gt; methionine. Asparagine, lysine, glutamine, aspartate and glutamate are very poor substrates. Using methionine as a substrate, acyl donor preference is propanoyl-CoA &gt; acetyl-CoA &gt;&gt; butyryl-CoA. Likely plays a role in the resistance against the toxic effects of L-methionine sulfoximine (MSX), via its ability to catalyze its acetylation; MSX is a rare amino acid which inhibits glutamine synthetase (GlnA). The sequence is that of L-amino acid N-acyltransferase MnaT from Escherichia coli (strain K12).